The sequence spans 628 residues: tRNA (carboxymethyluridine(34)-5-O)-methyltransferase alkbh8 (628 aa).

Positions 43-123 (QSLVVANGGL…ITLYLSFVEK (81 aa)) constitute an RRM domain. The Fe2OG dioxygenase domain occupies 218-335 (DPDQLTINQY…RTSFTFRKVR (118 aa)). 225 to 227 (NQY) lines the 2-oxoglutarate pocket. Fe cation contacts are provided by histidine 236 and aspartate 238. Residue histidine 240 coordinates Zn(2+). Histidine 290 lines the Fe cation pocket. 2 residues coordinate 2-oxoglutarate: arginine 326 and arginine 332. Residues cysteine 339, cysteine 341, and cysteine 347 each coordinate Zn(2+). The segment at 410-628 (ADVGCGNGKY…GNWCVILEKL (219 aa)) is methyltransferase domain. The disordered stretch occupies residues 563 to 582 (PTNKSKVTPENKEQNEKEHG). Positions 569–582 (VTPENKEQNEKEHG) are enriched in basic and acidic residues.

Belongs to the alkB family. Fe(2+) serves as cofactor.

Its subcellular location is the cytoplasm. The protein localises to the nucleus. The catalysed reaction is 5-(carboxymethyl)uridine(34) in tRNA + S-adenosyl-L-methionine = 5-(2-methoxy-2-oxoethyl)uridine(34) in tRNA + S-adenosyl-L-homocysteine. Functionally, catalyzes the methylation of 5-carboxymethyl uridine to 5-methylcarboxymethyl uridine at the wobble position of the anticodon loop in tRNA via its methyltransferase domain. Catalyzes the last step in the formation of 5-methylcarboxymethyl uridine at the wobble position of the anticodon loop in target tRNA. Has a preference for tRNA(Arg) and tRNA(Glu), and does not bind tRNA(Lys). Binds tRNA and catalyzes the iron and alpha-ketoglutarate dependent hydroxylation of 5-methylcarboxymethyl uridine at the wobble position of the anticodon loop in tRNA via its dioxygenase domain, giving rise to 5-(S)-methoxycarbonylhydroxymethyluridine; has a preference for tRNA(Gly). Required for normal survival after DNA damage. May inhibit apoptosis and promote cell survival and angiogenesis. This is tRNA (carboxymethyluridine(34)-5-O)-methyltransferase alkbh8 (alkbh8) from Xenopus tropicalis (Western clawed frog).